Consider the following 557-residue polypeptide: Carotenoid-cleaving dioxygenase, mitochondrial (557 aa).

Fe cation-binding residues include His-203, His-263, His-334, and His-551.

This sequence belongs to the carotenoid oxygenase family. Fe(2+) is required as a cofactor.

Its subcellular location is the mitochondrion. It catalyses the reaction all-trans-beta-carotene + O2 = beta-ionone + all-trans-10'-apo-beta-carotenal. It carries out the reaction 5-cis-lycopene + O2 = 5-cis-10'-apo-lycopenal + (3E,5E)-6,10-dimethylundeca-3,5,9-trien-2-one. The catalysed reaction is 13-cis-lycopene + O2 = 13-cis-10'-apo-lycopenal + (3E,5E)-6,10-dimethylundeca-3,5,9-trien-2-one. The enzyme catalyses lutein + O2 = (3R,6R)-hydroxy-alpha-ionone + (3R)-3-hydroxy-10'-apo-beta-carotenal. It catalyses the reaction lutein + O2 = (3R,6R)-3-hydroxy-10'-apo-alpha-carotenal + (3R)-hydroxy-beta-ionone. It carries out the reaction all-trans-zeaxanthin + 2 O2 = 4,9-dimethyldodeca-2,4,6,8,10-pentaenedial + 2 (3R)-hydroxy-beta-ionone. The catalysed reaction is all-trans-zeaxanthin + O2 = (3R)-3-hydroxy-10'-apo-beta-carotenal + (3R)-hydroxy-beta-ionone. The enzyme catalyses beta-cryptoxanthin + O2 = all-trans-10'-apo-beta-carotenal + (3R)-hydroxy-beta-ionone. It catalyses the reaction all-trans-10'-apo-beta-carotenal + O2 = beta-ionone + 4,9-dimethyldodeca-2,4,6,8,10-pentaenedial. It carries out the reaction (3R)-3-hydroxy-10'-apo-beta-carotenal + O2 = 4,9-dimethyldodeca-2,4,6,8,10-pentaenedial + (3R)-hydroxy-beta-ionone. The catalysed reaction is (3R,6R)-3-hydroxy-10'-apo-alpha-carotenal + O2 = (3R,6R)-hydroxy-alpha-ionone + 4,9-dimethyldodeca-2,4,6,8,10-pentaenedial. Functionally, broad specificity mitochondrial dioxygenase that mediates the asymmetric oxidative cleavage of carotenoids. Cleaves carotenes (pure hydrocarbon carotenoids) such as all-trans-beta-carotene and lycopene as well as xanthophylls (oxygenated carotenoids) such as zeaxanthin, lutein and beta-cryptoxanthin at both the 9,10 and the 9',10' carbon-carbon double bond. Through its function in carotenoids metabolism regulates oxidative stress and the production of important signaling molecules. The chain is Carotenoid-cleaving dioxygenase, mitochondrial from Pongo abelii (Sumatran orangutan).